Reading from the N-terminus, the 173-residue chain is Large ribosomal subunit protein uL16 (173 aa).

This sequence belongs to the universal ribosomal protein uL16 family.

This Methanosphaerula palustris (strain ATCC BAA-1556 / DSM 19958 / E1-9c) protein is Large ribosomal subunit protein uL16.